The chain runs to 513 residues: ATP synthase subunit alpha (513 aa).

169–176 (GDRQTGKT) is an ATP binding site.

This sequence belongs to the ATPase alpha/beta chains family. In terms of assembly, F-type ATPases have 2 components, CF(1) - the catalytic core - and CF(0) - the membrane proton channel. CF(1) has five subunits: alpha(3), beta(3), gamma(1), delta(1), epsilon(1). CF(0) has three main subunits: a(1), b(2) and c(9-12). The alpha and beta chains form an alternating ring which encloses part of the gamma chain. CF(1) is attached to CF(0) by a central stalk formed by the gamma and epsilon chains, while a peripheral stalk is formed by the delta and b chains.

It localises to the cell inner membrane. It carries out the reaction ATP + H2O + 4 H(+)(in) = ADP + phosphate + 5 H(+)(out). Produces ATP from ADP in the presence of a proton gradient across the membrane. The alpha chain is a regulatory subunit. The chain is ATP synthase subunit alpha from Klebsiella pneumoniae (strain 342).